The sequence spans 152 residues: uncharacterized protein (152 aa).

Helical transmembrane passes span 2 to 22 (GVVFAFGFYLIFIKLTGLKLM), 33 to 53 (LKMIFSILSVILAFLINWLIM), 58 to 78 (FLIEIIHPIASVWIFIILIYL), 97 to 117 (FMGNMSAIAIFLELLKIIEYV), and 122 to 142 (IASPITVALVFFIPVVVFFNC).

It is found in the cell membrane. This is an uncharacterized protein from Methanocaldococcus jannaschii (strain ATCC 43067 / DSM 2661 / JAL-1 / JCM 10045 / NBRC 100440) (Methanococcus jannaschii).